We begin with the raw amino-acid sequence, 351 residues long: Prostaglandin reductase 2 (351 aa).

99–100 (FY) contributes to the substrate binding site. NADP(+)-binding positions include 165–168 (GACG), Lys-192, Tyr-208, Asn-231, 253–259 (CGQISQY), 287–289 (FLV), and Asn-337. 288–290 (LVL) provides a ligand contact to substrate.

The protein belongs to the NADP-dependent oxidoreductase L4BD family. As to quaternary structure, monomer.

Its subcellular location is the cytoplasm. The catalysed reaction is 13,14-dihydro-15-oxo-prostaglandin E2 + NAD(+) = 15-oxoprostaglandin E2 + NADH + H(+). It catalyses the reaction 13,14-dihydro-15-oxo-prostaglandin E2 + NADP(+) = 15-oxoprostaglandin E2 + NADPH + H(+). The enzyme catalyses 13,14-dihydro-15-oxo-PGF2alpha + NADP(+) = 15-oxoprostaglandin F2alpha + NADPH + H(+). It carries out the reaction 13,14-dihydro-15-oxo-prostaglandin E1 + NADP(+) = 15-oxoprostaglandin E1 + NADPH + H(+). The catalysed reaction is 13,14-dihydro-15-oxo-prostaglandin F1alpha + NADP(+) = 15-oxoprostaglandin F1alpha + NADPH + H(+). Functionally, functions as 15-oxo-prostaglandin 13-reductase and acts on 15-keto-PGE1, 15-keto-PGE2, 15-keto-PGE1-alpha and 15-keto-PGE2-alpha with highest activity towards 15-keto-PGE2. Overexpression represses transcriptional activity of PPARG and inhibits adipocyte differentiation. The protein is Prostaglandin reductase 2 (PTGR2) of Pongo abelii (Sumatran orangutan).